A 37-amino-acid polypeptide reads, in one-letter code: Potassium channel toxin alpha-KTx 2.19 (37 aa).

3 disulfide bridges follow: C7/C28, C13/C33, and C17/C35.

Expressed by the venom gland.

Its subcellular location is the secreted. Inhibitor of voltage-gated potassium channels. The sequence is that of Potassium channel toxin alpha-KTx 2.19 from Rhopalurus junceus (Caribbean blue scorpion).